A 221-amino-acid chain; its full sequence is Oxaloacetate tautomerase FAHD1, mitochondrial (221 aa).

A mitochondrion-targeting transit peptide spans methionine 1–tyrosine 24. Arginine 22 contributes to the oxalate binding site. Serine 37 is modified (phosphoserine). Mg(2+)-binding residues include glutamate 68, glutamate 70, and aspartate 99. Lysine 110 carries the post-translational modification N6-acetyllysine. An N6-succinyllysine modification is found at lysine 112. Oxalate contacts are provided by lysine 120 and threonine 189.

It belongs to the FAH family. As to quaternary structure, homodimer. The cofactor is Mg(2+). Mn(2+) serves as cofactor. As to expression, ubiquitous (at protein level).

The protein localises to the mitochondrion. Its subcellular location is the cytoplasm. It localises to the cytosol. The enzyme catalyses oxaloacetate = enol-oxaloacetate. It catalyses the reaction oxaloacetate + H(+) = pyruvate + CO2. It carries out the reaction a 3-acylpyruvate + H2O = a carboxylate + pyruvate + H(+). The catalysed reaction is acetylpyruvate + H2O = acetate + pyruvate + H(+). The enzyme catalyses 3-fumarylpyruvate + H2O = fumarate + pyruvate + H(+). With respect to regulation, oxaloacetate decarboxylation is competitively inhibited by oxalate. In terms of biological role, tautomerase that converts enol-oxaloacetate, a strong inhibitor of succinate dehydrogenase, to the physiological keto form of oxaloacetate. It is thereby required to maximize aerobic respiration efficiency by preventing succinate dehydrogenase inhibition. Also acts as a weak oxaloacetate decarboxylase (ODx), catalyzing the decarboxylation of oxaloacetate (OAA) to pyruvate and CO(2), and as such is likely a regulatory enzyme in the TCA cycle. Also displays acylpyruvase activity, being able to hydrolyze acetylpyruvate and fumarylpyruvate in vitro. Exhibits only a weak hydrolase activity on methylacetopyruvate and acetylacetone, and no activity toward acetoacetyl-CoA. The chain is Oxaloacetate tautomerase FAHD1, mitochondrial from Homo sapiens (Human).